A 61-amino-acid chain; its full sequence is Alpha-conotoxin-like PnMGMR-02 (61 aa).

Positions 1-21 (MGMRMMFTVFLLVVLATTVVS) are cleaved as a signal peptide. A propeptide spanning residues 22–44 (FTSDRASDGGNAAASDLIALTIK) is cleaved from the precursor. 2 cysteine pairs are disulfide-bonded: cysteine 46–cysteine 52 and cysteine 47–cysteine 60. The interval 48 to 50 (SRP) is ser-Xaa-Pro motif, crucial for potent interaction with nAChR. The residue at position 60 (cysteine 60) is a Cysteine amide.

Belongs to the conotoxin A superfamily. As to expression, expressed by the venom duct.

It localises to the secreted. Functionally, alpha-conotoxins act on postsynaptic membranes, they bind to the nicotinic acetylcholine receptors (nAChR) and thus inhibit them. This toxin blocks mammalian nAChRs (alpha-7 &gt; alpha-3/beta-2). This Conus pennaceus (Feathered cone) protein is Alpha-conotoxin-like PnMGMR-02.